Here is a 560-residue protein sequence, read N- to C-terminus: Synaptotagmin-5 (560 aa).

The chain crosses the membrane as a helical span at residues 2–22 (GFIVGVVIGLLVGIAIIIGFV). The SMP-LTD domain occupies 67-249 (ERQKLTWLNH…WPVRKVIPII (183 aa)). The tract at residues 227–523 (EETIRDAVED…YIGRCILTLT (297 aa)) is phospholipid binding. C2 domains follow at residues 243-364 (RKVI…DVWL) and 417-535 (TTDE…KDWY). Asp278, Asp284, Asp334, Glu336, Asp451, Asp457, Asp506, Asp508, and Asp513 together coordinate Ca(2+).

Belongs to the synaptotagmin family. It depends on Ca(2+) as a cofactor.

Its subcellular location is the membrane. May be involved in membrane trafficking. The polypeptide is Synaptotagmin-5 (SYT5) (Arabidopsis thaliana (Mouse-ear cress)).